We begin with the raw amino-acid sequence, 416 residues long: Tumor necrosis factor receptor superfamily member 19 (416 aa).

A signal peptide spans Met-1–Cys-29. Residues Glu-30–Leu-170 are Extracellular-facing. TNFR-Cys repeat units follow at residues Asp-33–Cys-72 and Pro-74–Cys-114. Cystine bridges form between Cys-34-Cys-46, Cys-49-Cys-62, Cys-52-Cys-72, Cys-75-Cys-89, Cys-92-Cys-106, Cys-95-Cys-114, Cys-117-Cys-135, and Cys-138-Cys-149. A glycan (N-linked (GlcNAc...) asparagine) is linked at Asn-105. One copy of the TNFR-Cys 3; truncated repeat lies at Asp-116–Cys-149. The chain crosses the membrane as a helical span at residues Ala-171–Ile-191. The Cytoplasmic portion of the chain corresponds to Tyr-192–Ala-416. A disordered region spans residues Leu-321 to Ala-416. Polar residues-rich tracts occupy residues Glu-331–Gly-351, Leu-360–Thr-370, and Val-381–Gln-396.

As to quaternary structure, associates with TRAF1, TRAF2, TRAF3 and TRAF5. Interacts with LINGO1. As to expression, highly expressed in adult brain, and in embryos from day 11-17, but not earlier. Detected in embryonic brain and epithelium, and at lower levels in adult heart, lung and liver. In neonatal mice, mainly in hair follicles and neuron-like cells in the cerebellum, but not in the skin epidermis. Isoform 3 was found in embryonic day 17.5 skin but not in brain and liver.

It localises to the cell membrane. It is found in the secreted. Can mediate activation of c-Jun and NF-kappa-B. May promote caspase-independent cell death. Isoform 2 and isoform 3 may act as decoy receptors. This chain is Tumor necrosis factor receptor superfamily member 19 (Tnfrsf19), found in Mus musculus (Mouse).